Here is a 170-residue protein sequence, read N- to C-terminus: Crossover junction endodeoxyribonuclease RuvC (170 aa).

Active-site residues include Asp-12, Glu-72, and Asp-144. Asp-12, Glu-72, and Asp-144 together coordinate Mg(2+).

Belongs to the RuvC family. As to quaternary structure, homodimer which binds Holliday junction (HJ) DNA. The HJ becomes 2-fold symmetrical on binding to RuvC with unstacked arms; it has a different conformation from HJ DNA in complex with RuvA. In the full resolvosome a probable DNA-RuvA(4)-RuvB(12)-RuvC(2) complex forms which resolves the HJ. Mg(2+) serves as cofactor.

Its subcellular location is the cytoplasm. It catalyses the reaction Endonucleolytic cleavage at a junction such as a reciprocal single-stranded crossover between two homologous DNA duplexes (Holliday junction).. Its function is as follows. The RuvA-RuvB-RuvC complex processes Holliday junction (HJ) DNA during genetic recombination and DNA repair. Endonuclease that resolves HJ intermediates. Cleaves cruciform DNA by making single-stranded nicks across the HJ at symmetrical positions within the homologous arms, yielding a 5'-phosphate and a 3'-hydroxyl group; requires a central core of homology in the junction. The consensus cleavage sequence is 5'-(A/T)TT(C/G)-3'. Cleavage occurs on the 3'-side of the TT dinucleotide at the point of strand exchange. HJ branch migration catalyzed by RuvA-RuvB allows RuvC to scan DNA until it finds its consensus sequence, where it cleaves and resolves the cruciform DNA. The sequence is that of Crossover junction endodeoxyribonuclease RuvC from Nitrobacter hamburgensis (strain DSM 10229 / NCIMB 13809 / X14).